The primary structure comprises 56 residues: Potassium channel toxin alpha-KTx 9.8 (56 aa).

A signal peptide spans Met1 to Ala19. Residues Ile20–Ala28 constitute a propeptide that is removed on maturation. Cystine bridges form between Cys31–Cys47, Cys34–Cys52, and Cys38–Cys54.

Belongs to the short scorpion toxin superfamily. Potassium channel inhibitor family. Alpha-KTx 09 subfamily. In terms of tissue distribution, expressed by the venom gland.

It is found in the secreted. In terms of biological role, potassium channel inhibitor. This is Potassium channel toxin alpha-KTx 9.8 from Buthus israelis (Israeli scorpion).